Here is a 420-residue protein sequence, read N- to C-terminus: Glutamyl-tRNA reductase (420 aa).

Residues 49-52, Ser-109, 114-116, and Gln-120 each bind substrate; these read TCNR and EPQ. The Nucleophile role is filled by Cys-50. Residue 189 to 194 coordinates NADP(+); the sequence is GAGETI.

It belongs to the glutamyl-tRNA reductase family. Homodimer.

It carries out the reaction (S)-4-amino-5-oxopentanoate + tRNA(Glu) + NADP(+) = L-glutamyl-tRNA(Glu) + NADPH + H(+). It participates in porphyrin-containing compound metabolism; protoporphyrin-IX biosynthesis; 5-aminolevulinate from L-glutamyl-tRNA(Glu): step 1/2. Functionally, catalyzes the NADPH-dependent reduction of glutamyl-tRNA(Glu) to glutamate 1-semialdehyde (GSA). The chain is Glutamyl-tRNA reductase from Proteus mirabilis (strain HI4320).